A 90-amino-acid chain; its full sequence is MPRSIKKGPFVDHHLMKKIDEANATGAKKPIKTWSRRSMVLPEMIGKTIAVHNGKQHVPVLVSDNMVGHKLGEFAPTRTYKGHQADKKSK.

This sequence belongs to the universal ribosomal protein uS19 family.

In terms of biological role, protein S19 forms a complex with S13 that binds strongly to the 16S ribosomal RNA. This is Small ribosomal subunit protein uS19 from Methylococcus capsulatus (strain ATCC 33009 / NCIMB 11132 / Bath).